The primary structure comprises 123 residues: Large ribosomal subunit protein uL29 (123 aa).

Belongs to the universal ribosomal protein uL29 family. In terms of assembly, component of the large ribosomal subunit.

It localises to the cytoplasm. In terms of biological role, component of the large ribosomal subunit. The ribosome is a large ribonucleoprotein complex responsible for the synthesis of proteins in the cell. Plays an essential role in early embryonic development. May act as a haploinsufficient tumor suppressor. This Danio rerio (Zebrafish) protein is Large ribosomal subunit protein uL29 (rpl35).